The chain runs to 179 residues: Apoptosis regulator Bcl-2 homolog (179 aa).

A BH1 motif is present at residues Glu-76–Ala-95. The short motif at Pro-126–Ser-141 is the BH2 element.

The protein belongs to the Bcl-2 family. As to quaternary structure, interacts with host BECN1 (via BH3 homology domain); this interaction allows the virus to inhibit BECN1, and thus autophagy. Interacts with host BID. Interacts with host BAX.

The protein resides in the host mitochondrion. It localises to the host endoplasmic reticulum. Functionally, suppresses apoptosis in host cell to promote the viral replication. Has the ability to potentially bind to all the members of the proapoptotic Bcl-2 family. Inhibits autophagy by interacting with host Beclin 1 (BECN1). This is Apoptosis regulator Bcl-2 homolog from Ornithodoros (relapsing fever ticks).